A 73-amino-acid polypeptide reads, in one-letter code: Tetrahydromethanopterin S-methyltransferase subunit G (73 aa).

The chain crosses the membrane as a helical span at residues 48–68; sequence IGILYGAVVGLLLFLIYVSVS.

It belongs to the MtrG family. In terms of assembly, the complex is composed of 8 subunits; MtrA, MtrB, MtrC, MtrD, MtrE, MtrF, MtrG and MtrH.

Its subcellular location is the cell membrane. The enzyme catalyses 5-methyl-5,6,7,8-tetrahydromethanopterin + coenzyme M + 2 Na(+)(in) = 5,6,7,8-tetrahydromethanopterin + methyl-coenzyme M + 2 Na(+)(out). It functions in the pathway one-carbon metabolism; methanogenesis from CO(2); methyl-coenzyme M from 5,10-methylene-5,6,7,8-tetrahydromethanopterin: step 2/2. Part of a complex that catalyzes the formation of methyl-coenzyme M and tetrahydromethanopterin from coenzyme M and methyl-tetrahydromethanopterin. This is an energy-conserving, sodium-ion translocating step. The polypeptide is Tetrahydromethanopterin S-methyltransferase subunit G (Methanosarcina acetivorans (strain ATCC 35395 / DSM 2834 / JCM 12185 / C2A)).